Reading from the N-terminus, the 730-residue chain is Elongation factor 2 (730 aa).

The tr-type G domain occupies 19–260 (QRIRNIGIVA…MVIHFLPNPL (242 aa)). GTP-binding positions include 28–35 (AHIDHGKT), 94–98 (DTPGH), and 148–151 (NKVD). Histidine 596 is modified (diphthamide).

The protein belongs to the TRAFAC class translation factor GTPase superfamily. Classic translation factor GTPase family. EF-G/EF-2 subfamily.

It is found in the cytoplasm. In terms of biological role, catalyzes the GTP-dependent ribosomal translocation step during translation elongation. During this step, the ribosome changes from the pre-translocational (PRE) to the post-translocational (POST) state as the newly formed A-site-bound peptidyl-tRNA and P-site-bound deacylated tRNA move to the P and E sites, respectively. Catalyzes the coordinated movement of the two tRNA molecules, the mRNA and conformational changes in the ribosome. This chain is Elongation factor 2, found in Methanosarcina mazei (strain ATCC BAA-159 / DSM 3647 / Goe1 / Go1 / JCM 11833 / OCM 88) (Methanosarcina frisia).